The following is a 635-amino-acid chain: Elongation factor 4 (635 aa).

The tr-type G domain maps to 11–193; it reads EKIRNFSIIA…QIVEKVPAPT (183 aa). GTP contacts are provided by residues 23–28 and 140–143; these read DHGKST and NKID.

Belongs to the TRAFAC class translation factor GTPase superfamily. Classic translation factor GTPase family. LepA subfamily.

It localises to the cell membrane. The catalysed reaction is GTP + H2O = GDP + phosphate + H(+). Required for accurate and efficient protein synthesis under certain stress conditions. May act as a fidelity factor of the translation reaction, by catalyzing a one-codon backward translocation of tRNAs on improperly translocated ribosomes. Back-translocation proceeds from a post-translocation (POST) complex to a pre-translocation (PRE) complex, thus giving elongation factor G a second chance to translocate the tRNAs correctly. Binds to ribosomes in a GTP-dependent manner. In Streptococcus pyogenes serotype M12 (strain MGAS2096), this protein is Elongation factor 4.